A 76-amino-acid polypeptide reads, in one-letter code: Omega-conotoxin-like TxO5 (76 aa).

An N-terminal signal peptide occupies residues 1-22; that stretch reads MKLTCMMIVAVLFLTAWTFVTA. The propeptide occupies 23–48; it reads ITSNGLENLFPKAHHEMKNPEASKLN. Disulfide bonds link Cys-51–Cys-66, Cys-58–Cys-70, and Cys-65–Cys-75.

It belongs to the conotoxin O1 superfamily. In terms of tissue distribution, expressed by the venom duct.

It is found in the secreted. Its function is as follows. Omega-conotoxins act at presynaptic membranes, they bind and block voltage-gated calcium channels (Cav). The sequence is that of Omega-conotoxin-like TxO5 from Conus textile (Cloth-of-gold cone).